The sequence spans 497 residues: 3-ketoacyl-CoA synthase 6 (497 aa).

2 helical membrane passes run 25–45 (LVNH…AVEL) and 64–84 (LVQV…YFMS). In terms of domain architecture, FAE spans 81-370 (YFMSKPRTIY…FLTSLIGRKI (290 aa)). Active-site residues include cysteine 225, histidine 304, histidine 388, histidine 392, histidine 421, and asparagine 425.

This sequence belongs to the thiolase-like superfamily. Chalcone/stilbene synthases family. As to expression, in epidermal cells of aerial tissues and in the tapetum of anthers near maturity. Expressed in siliques, flowers and leaves.

It is found in the endoplasmic reticulum membrane. The enzyme catalyses a very-long-chain acyl-CoA + malonyl-CoA + H(+) = a very-long-chain 3-oxoacyl-CoA + CO2 + CoA. It participates in lipid metabolism; fatty acid biosynthesis. Strongly inhibited by metazachlor and mefluidide. Its function is as follows. Contributes to cuticular wax and suberin biosynthesis. Involved in both decarbonylation and acyl-reduction wax synthesis pathways. Required for elongation of C24 fatty acids, an essential step of the cuticular wax production. Major condensing enzyme for stem wax and pollen coat lipid biosynthesis. In Arabidopsis thaliana (Mouse-ear cress), this protein is 3-ketoacyl-CoA synthase 6.